The sequence spans 160 residues: GTP-dependent dephospho-CoA kinase (160 aa).

Residues aspartate 45, isoleucine 46, valine 47, aspartate 59, lysine 61, glutamate 108, and aspartate 130 each contribute to the GTP site.

The protein belongs to the GTP-dependent DPCK family.

It catalyses the reaction 3'-dephospho-CoA + GTP = GDP + CoA + H(+). Its pathway is cofactor biosynthesis; coenzyme A biosynthesis. Catalyzes the GTP-dependent phosphorylation of the 3'-hydroxyl group of dephosphocoenzyme A to form coenzyme A (CoA). The chain is GTP-dependent dephospho-CoA kinase from Staphylothermus marinus (strain ATCC 43588 / DSM 3639 / JCM 9404 / F1).